Consider the following 409-residue polypeptide: uncharacterized protein (409 aa).

4 helical membrane-spanning segments follow: residues 20 to 40 (ILTM…VSML), 283 to 303 (FALL…IGVM), 344 to 364 (IGGI…TVIF), and 372 to 392 (IPAV…FGLL).

Belongs to the ABC-4 integral membrane protein family.

The protein localises to the cell membrane. This is an uncharacterized protein from Bacillus subtilis (strain 168).